A 206-amino-acid polypeptide reads, in one-letter code: Dephospho-CoA kinase (206 aa).

The DPCK domain maps to 4–200 (TVALTGGIGS…ASYLKLASQF (197 aa)). 12–17 (GSGKST) provides a ligand contact to ATP.

Belongs to the CoaE family.

It is found in the cytoplasm. The catalysed reaction is 3'-dephospho-CoA + ATP = ADP + CoA + H(+). Its pathway is cofactor biosynthesis; coenzyme A biosynthesis; CoA from (R)-pantothenate: step 5/5. Its function is as follows. Catalyzes the phosphorylation of the 3'-hydroxyl group of dephosphocoenzyme A to form coenzyme A. This chain is Dephospho-CoA kinase, found in Salmonella paratyphi A (strain ATCC 9150 / SARB42).